The following is a 2351-amino-acid chain: Coagulation factor VIII (2351 aa).

The first 19 residues, 1–19, serve as a signal peptide directing secretion; it reads MQIELSTCFFLCLLRFCFS. Plastocyanin-like domains lie at 20 to 198 and 206 to 348; these read ATRR…LLVC and EKTQ…VDSC. Residues 20-348 form the F5/8 type A 1 domain; the sequence is ATRRYYLGAV…MEAYVKVDSC (329 aa). A glycan (N-linked (GlcNAc...) asparagine) is linked at Asn-60. Cys-172 and Cys-198 are joined by a disulfide. Asn-258 is a glycosylation site (N-linked (GlcNAc...) asparagine). Cys-267 and Cys-348 are oxidised to a cystine. Tyr-365 bears the Sulfotyrosine mark. Plastocyanin-like domains lie at 399-573 and 583-730; these read KTWV…LLIC and NQIM…VSSC. The F5/8 type A 2 domain occupies 399–730; that stretch reads KTWVHYIAAE…MTALLKVSSC (332 aa). A disulfide bond links Cys-547 and Cys-573. A glycan (N-linked (GlcNAc...) asparagine) is linked at Asn-601. A disulfide bridge links Cys-649 with Cys-730. Tyr-737, Tyr-738, and Tyr-742 each carry sulfotyrosine. The b stretch occupies residues 760-1667; that stretch reads SFSQNSRHPS…NPPVLKRHQR (908 aa). Residues Asn-776, Asn-803, Asn-847, and Asn-919 are each glycosylated (N-linked (GlcNAc...) asparagine). Disordered stretches follow at residues 906 to 928 and 941 to 961; these read STIP…PPSM and FGKK…SEEN. Asn-962, Asn-982, Asn-1020, Asn-1024, Asn-1074, Asn-1085, Asn-1204, Asn-1274, Asn-1278, Asn-1301, Asn-1319, Asn-1431, and Asn-1461 each carry an N-linked (GlcNAc...) asparagine glycan. Sulfotyrosine is present on residues Tyr-1683 and Tyr-1699. 2 Plastocyanin-like domains span residues 1713–1877 and 1887–2040; these read KTRH…LLVC and GRQV…SNKC. The region spanning 1713-2040 is the F5/8 type A 3 domain; the sequence is KTRHYFIAAV…TLFLVYSNKC (328 aa). An N-linked (GlcNAc...) asparagine glycan is attached at Asn-1829. Disulfide bonds link Cys-1851/Cys-1877, Cys-1918/Cys-1922, Cys-2040/Cys-2188, and Cys-2193/Cys-2345. 2 consecutive F5/8 type C domains span residues 2040–2188 and 2193–2345; these read CQTP…LMGC and CSMP…VLGC. A glycan (N-linked (GlcNAc...) asparagine) is linked at Asn-2137.

Belongs to the multicopper oxidase family. Interacts with VWF/vWF. vWF binding is essential for the stabilization of F8 in circulation. Sulfation on Tyr-1699 is essential for binding vWF. In terms of processing, proteolytically cleaved by cathepsin CTSG to produce a partially activated form.

The protein localises to the secreted. Its subcellular location is the extracellular space. In terms of biological role, factor VIII, along with calcium and phospholipid, acts as a cofactor for F9/factor IXa when it converts F10/factor X to the activated form, factor Xa. This Homo sapiens (Human) protein is Coagulation factor VIII (F8).